A 535-amino-acid chain; its full sequence is CTP synthase (535 aa).

The tract at residues 1–267 (MTKYIFVTGG…DQIVCDHLKL (267 aa)) is amidoligase domain. Ser13 contacts CTP. UTP is bound at residue Ser13. 14–19 (SLGKGI) provides a ligand contact to ATP. An L-glutamine-binding site is contributed by Tyr54. Asp71 lines the ATP pocket. Positions 71 and 141 each coordinate Mg(2+). Residues 148-150 (DIE), 188-193 (KTKPTQ), and Lys224 each bind CTP. UTP contacts are provided by residues 188–193 (KTKPTQ) and Lys224. 240–242 (RDA) is a binding site for ATP. The Glutamine amidotransferase type-1 domain occupies 292–534 (KIALVGKYVE…VKASLTNKES (243 aa)). Residue Gly354 participates in L-glutamine binding. Cys381 serves as the catalytic Nucleophile; for glutamine hydrolysis. Residues 382 to 385 (LGMQ), Glu405, and Arg462 contribute to the L-glutamine site. Active-site residues include His507 and Glu509.

Belongs to the CTP synthase family. As to quaternary structure, homotetramer.

The enzyme catalyses UTP + L-glutamine + ATP + H2O = CTP + L-glutamate + ADP + phosphate + 2 H(+). The catalysed reaction is L-glutamine + H2O = L-glutamate + NH4(+). It carries out the reaction UTP + NH4(+) + ATP = CTP + ADP + phosphate + 2 H(+). It participates in pyrimidine metabolism; CTP biosynthesis via de novo pathway; CTP from UDP: step 2/2. With respect to regulation, allosterically activated by GTP, when glutamine is the substrate; GTP has no effect on the reaction when ammonia is the substrate. The allosteric effector GTP functions by stabilizing the protein conformation that binds the tetrahedral intermediate(s) formed during glutamine hydrolysis. Inhibited by the product CTP, via allosteric rather than competitive inhibition. Catalyzes the ATP-dependent amination of UTP to CTP with either L-glutamine or ammonia as the source of nitrogen. Regulates intracellular CTP levels through interactions with the four ribonucleotide triphosphates. This chain is CTP synthase, found in Bacillus anthracis (strain A0248).